Consider the following 467-residue polypeptide: MGKTLAEKVWEAHIVRRGEGYEPDLLYIDLHLVHEVTSPQAFEGLRLAGRQVRRPDLTLATEDHNVPTTGIDLPIADPVSRTQVDTLRRNCEEFGIRLHPMGDAEQGIVHVVGPQLGLTQPGTTVVCGDSHTSTHGAFGALAFGIGTSEVEHVLATQTLPLRPFKTMAINIEGTLRPGVTSKDVILAVIAKIGTGGGQGYVLEYRGSAVEKMSMEARMTMCNMSIEAGARAGMIAPDETTFAYLQGRPHAPEGTEWDAAVEYWKTLRTDEDAEFDAEVTLDADELTPFVTWGTNPGQGLPLGARIPDPAAIADESERFATEKALDYMGLEAGTPLREVAVDTVFLGSCTNGRIEDLRAAADVLKGRKVASEVRMLVVPGSMRVRKQAEAEGLNEVFTAAGAEWRSAGCSMCLGMNPDQLTPGERSASTSNRNFEGRQGKGGRTHLVSPLVAAATAVRGTLSSPEDLD.

3 residues coordinate [4Fe-4S] cluster: C348, C408, and C411. The segment at 417 to 445 is disordered; the sequence is DQLTPGERSASTSNRNFEGRQGKGGRTHL.

This sequence belongs to the aconitase/IPM isomerase family. LeuC type 1 subfamily. Heterodimer of LeuC and LeuD. [4Fe-4S] cluster serves as cofactor.

The enzyme catalyses (2R,3S)-3-isopropylmalate = (2S)-2-isopropylmalate. The protein operates within amino-acid biosynthesis; L-leucine biosynthesis; L-leucine from 3-methyl-2-oxobutanoate: step 2/4. In terms of biological role, catalyzes the isomerization between 2-isopropylmalate and 3-isopropylmalate, via the formation of 2-isopropylmaleate. The chain is 3-isopropylmalate dehydratase large subunit from Saccharopolyspora erythraea (strain ATCC 11635 / DSM 40517 / JCM 4748 / NBRC 13426 / NCIMB 8594 / NRRL 2338).